Consider the following 484-residue polypeptide: ATP synthase subunit beta (484 aa).

Gly-152–Thr-159 provides a ligand contact to ATP.

It belongs to the ATPase alpha/beta chains family. As to quaternary structure, F-type ATPases have 2 components, CF(1) - the catalytic core - and CF(0) - the membrane proton channel. CF(1) has five subunits: alpha(3), beta(3), gamma(1), delta(1), epsilon(1). CF(0) has three main subunits: a(1), b(2) and c(9-12). The alpha and beta chains form an alternating ring which encloses part of the gamma chain. CF(1) is attached to CF(0) by a central stalk formed by the gamma and epsilon chains, while a peripheral stalk is formed by the delta and b chains.

The protein resides in the cell inner membrane. It carries out the reaction ATP + H2O + 4 H(+)(in) = ADP + phosphate + 5 H(+)(out). Functionally, produces ATP from ADP in the presence of a proton gradient across the membrane. The catalytic sites are hosted primarily by the beta subunits. The chain is ATP synthase subunit beta from Campylobacter lari (strain RM2100 / D67 / ATCC BAA-1060).